We begin with the raw amino-acid sequence, 541 residues long: Periplasmic oligopeptide-binding protein OppA (541 aa).

The N-terminal stretch at 1-20 (MQHKLLFSAIALALSYSAQA) is a signal peptide.

Belongs to the bacterial solute-binding protein 5 family. In terms of assembly, the complex is composed of two ATP-binding proteins (OppD and OppF), two transmembrane proteins (OppB and OppC) and a solute-binding protein (OppA).

The protein localises to the periplasm. Its function is as follows. Part of the ABC transporter complex OppABCDF involved in the uptake of oligopeptides. Plays an important nutritional role. Binds peptides containing from two to five amino acid residues. This chain is Periplasmic oligopeptide-binding protein OppA (oppA), found in Haemophilus influenzae (strain ATCC 51907 / DSM 11121 / KW20 / Rd).